A 199-amino-acid polypeptide reads, in one-letter code: Ribonuclease HII (199 aa).

The RNase H type-2 domain maps to 10 to 199; sequence RIEAGCDEAG…LLPEQLTLGF (190 aa). Residues aspartate 16, glutamate 17, and aspartate 108 each coordinate a divalent metal cation.

Belongs to the RNase HII family. It depends on Mn(2+) as a cofactor. Mg(2+) serves as cofactor.

Its subcellular location is the cytoplasm. It catalyses the reaction Endonucleolytic cleavage to 5'-phosphomonoester.. Its function is as follows. Endonuclease that specifically degrades the RNA of RNA-DNA hybrids. This Parabacteroides distasonis (strain ATCC 8503 / DSM 20701 / CIP 104284 / JCM 5825 / NCTC 11152) protein is Ribonuclease HII.